The following is a 565-amino-acid chain: Acyl-CoA ligase easD (565 aa).

ATP-binding positions include 213-221, 354-359, aspartate 438, arginine 457, and lysine 555; these read TSGTSGKQK and HAYGLT. The tract at residues 284 to 354 is SBD1; that stretch reads DMQLMLKTIE…KLRPTWKINH (71 aa). The segment at 355 to 417 is SBD2; that stretch reads AYGLTETGVV…FNSPSCFLGY (63 aa).

This sequence belongs to the ATP-dependent AMP-binding enzyme family.

The protein operates within antibiotic biosynthesis. Its function is as follows. Acyl-CoA ligase; part of the gene cluster that mediates the biosynthesis of emericellamides, secondary metabolites acting as antibiotics. The biosynthesis of emericellamides initiates from the highly reducing polyketide synthase easB which catalyzes the formation of the linear polyketide chain. EasB produces several polyketides that can be further processed by the downstream enzymes. The polyketides are released from easB as linear polyketide carboxylic acids, which are converted to CoA thioesters by the acyl-CoA ligase easD. The substrates are then loaded onto the acyltransferase easC, which shuttles them to the first thiolation (T) domain of the nonribosomal peptide synthetase easA. EasA then performs condensation of the polyketides with one glycine, two alanine, one valine and one leucine residues. A last step of cyclization leads to the production of emericellamides. This Emericella nidulans (strain FGSC A4 / ATCC 38163 / CBS 112.46 / NRRL 194 / M139) (Aspergillus nidulans) protein is Acyl-CoA ligase easD.